A 216-amino-acid polypeptide reads, in one-letter code: MDFYYLPGSAPCRAVQMTAAAVGVELNLKLTDLMKGEHMKPEFLKLNPQHCVPTLVDNGFALWESRAIMCYLVEKYGKPCNNDSLYPTDPQKRAIVNQRLYFDMGTLYQRFGDYYYPQIFEGAPANETNFAKIGEALAFLDTFLEGERFVAGGNGYSLADISLYATLTTFEVAGYDFSAYVNVLRWYKSMPELIPASDTNRSWAEAARPFFDKVKH.

In terms of domain architecture, GST N-terminal spans 1-80; that stretch reads MDFYYLPGSA…YLVEKYGKPC (80 aa). Glutathione-binding positions include Ser9, 50–52, and 64–66; these read HCV and ESR. The GST C-terminal domain maps to 89–210; it reads DPQKRAIVNQ…RSWAEAARPF (122 aa).

This sequence belongs to the GST superfamily. Theta family. Homodimer.

It carries out the reaction RX + glutathione = an S-substituted glutathione + a halide anion + H(+). In terms of biological role, conjugation of reduced glutathione to a wide number of exogenous and endogenous hydrophobic electrophiles. In Anopheles gambiae (African malaria mosquito), this protein is Glutathione S-transferase 1, isoform B.